A 398-amino-acid polypeptide reads, in one-letter code: S-adenosylmethionine synthase (398 aa).

H16 contributes to the ATP binding site. D18 contacts Mg(2+). E44 is a binding site for K(+). L-methionine-binding residues include E57 and Q100. The tract at residues 100–110 (QSPDIAQGVNE) is flexible loop. ATP contacts are provided by residues 175–177 (DAK), 242–243 (RF), D251, 257–258 (RK), A274, and K278. Residue D251 coordinates L-methionine. Residue K282 coordinates L-methionine.

It belongs to the AdoMet synthase family. In terms of assembly, homotetramer; dimer of dimers. The cofactor is Mg(2+). K(+) is required as a cofactor.

The protein resides in the cytoplasm. It catalyses the reaction L-methionine + ATP + H2O = S-adenosyl-L-methionine + phosphate + diphosphate. It participates in amino-acid biosynthesis; S-adenosyl-L-methionine biosynthesis; S-adenosyl-L-methionine from L-methionine: step 1/1. In terms of biological role, catalyzes the formation of S-adenosylmethionine (AdoMet) from methionine and ATP. The overall synthetic reaction is composed of two sequential steps, AdoMet formation and the subsequent tripolyphosphate hydrolysis which occurs prior to release of AdoMet from the enzyme. This chain is S-adenosylmethionine synthase, found in Streptococcus agalactiae serotype III (strain NEM316).